An 864-amino-acid chain; its full sequence is Seed linoleate 9S-lipoxygenase-2 (864 aa).

One can recognise a PLAT domain in the interval 46 to 171 (SGINIIGSTL…LYKSPRIFFA (126 aa)). Residues 174 to 864 (SYLPSETPSP…FRGIPNSISI (691 aa)) form the Lipoxygenase domain. Residues 230 to 264 (PILGGSSTHPYPRRGRTGRYPTRKDPNSEKPATET) are disordered. Over residues 251–264 (TRKDPNSEKPATET) the composition is skewed to basic and acidic residues. Residues His524, His529, His716, Asn720, and Ile864 each coordinate Fe cation.

It belongs to the lipoxygenase family. Fe cation is required as a cofactor.

Its subcellular location is the cytoplasm. It carries out the reaction (9Z,12Z)-octadecadienoate + O2 = (9S)-hydroperoxy-(10E,12Z)-octadecadienoate. It participates in lipid metabolism; oxylipin biosynthesis. Plant lipoxygenase may be involved in a number of diverse aspects of plant physiology including growth and development, pest resistance, and senescence or responses to wounding. It catalyzes the hydroperoxidation of lipids containing a cis,cis-1,4-pentadiene structure. This is Seed linoleate 9S-lipoxygenase-2 (LOX1.2) from Pisum sativum (Garden pea).